We begin with the raw amino-acid sequence, 295 residues long: Hydroxyquinol 1,2-dioxygenase (295 aa).

Positions 165, 200, 224, and 226 each coordinate Fe cation.

It belongs to the intradiol ring-cleavage dioxygenase family. The cofactor is Fe(3+).

It catalyses the reaction benzene-1,2,4-triol + O2 = maleylacetate + 2 H(+). The protein operates within aromatic compound metabolism. Its function is as follows. Involved in the gamma-resorcylate (2,6-dihydroxybenzoate) catabolism. Catalyzes the conversion of hydroxyquinol to malelylacetate. The sequence is that of Hydroxyquinol 1,2-dioxygenase from Rhizobium sp. (strain MTP-10005).